The primary structure comprises 366 residues: Probable protein arginine N-methyltransferase 1.2 (366 aa).

The SAM-dependent MTase PRMT-type domain occupies 45–347 (ADYYFDSYSH…NPRDVDIKLS (303 aa)). Residues E157 and E166 contribute to the active site.

The protein belongs to the class I-like SAM-binding methyltransferase superfamily. Protein arginine N-methyltransferase family. Interacts with FIB2 and PRMT11.

The protein resides in the nucleus. The protein localises to the cytoplasm. Functionally, methylates (mono and asymmetric dimethylation) the guanidino nitrogens of arginyl residues present in a glycine and arginine-rich domain. Type I arginine methyltransferase active on both histones and non-histone proteins. Mediates the methylation of MED36A. This chain is Probable protein arginine N-methyltransferase 1.2 (PRMT12), found in Arabidopsis thaliana (Mouse-ear cress).